A 126-amino-acid chain; its full sequence is Ribosome-binding factor A (126 aa).

The protein belongs to the RbfA family. Monomer. Binds 30S ribosomal subunits, but not 50S ribosomal subunits or 70S ribosomes.

It is found in the cytoplasm. In terms of biological role, one of several proteins that assist in the late maturation steps of the functional core of the 30S ribosomal subunit. Associates with free 30S ribosomal subunits (but not with 30S subunits that are part of 70S ribosomes or polysomes). Required for efficient processing of 16S rRNA. May interact with the 5'-terminal helix region of 16S rRNA. This chain is Ribosome-binding factor A, found in Clostridioides difficile (strain 630) (Peptoclostridium difficile).